The primary structure comprises 494 residues: ATP synthase subunit beta, plastid (494 aa).

ATP is bound at residue 169 to 176 (GGAGVGKT).

Belongs to the ATPase alpha/beta chains family. In terms of assembly, F-type ATPases have 2 components, CF(1) - the catalytic core - and CF(0) - the membrane proton channel. CF(1) has five subunits: alpha(3), beta(3), gamma(1), delta(1), epsilon(1). CF(0) has four main subunits: a(1), b(1), b'(1) and c(9-12).

It is found in the plastid thylakoid membrane. It catalyses the reaction ATP + H2O + 4 H(+)(in) = ADP + phosphate + 5 H(+)(out). Produces ATP from ADP in the presence of a proton gradient across the membrane. The catalytic sites are hosted primarily by the beta subunits. The sequence is that of ATP synthase subunit beta, plastid (atpB) from Cuscuta gronovii (Common dodder).